Reading from the N-terminus, the 574-residue chain is Aspartate--tRNA ligase (574 aa).

Residue E172 coordinates L-aspartate. The interval 196 to 199 (QIFK) is aspartate. An L-aspartate-binding site is contributed by R218. ATP-binding positions include 218–220 (RDE) and Q227. H453 serves as a coordination point for L-aspartate. E487 is a binding site for ATP. Position 494 (R494) interacts with L-aspartate. Residue 539–542 (GLDR) participates in ATP binding.

The protein belongs to the class-II aminoacyl-tRNA synthetase family. Type 1 subfamily. Homodimer.

Its subcellular location is the cytoplasm. The catalysed reaction is tRNA(Asp) + L-aspartate + ATP = L-aspartyl-tRNA(Asp) + AMP + diphosphate. Catalyzes the attachment of L-aspartate to tRNA(Asp) in a two-step reaction: L-aspartate is first activated by ATP to form Asp-AMP and then transferred to the acceptor end of tRNA(Asp). This Blochmanniella pennsylvanica (strain BPEN) protein is Aspartate--tRNA ligase.